We begin with the raw amino-acid sequence, 393 residues long: NAD(P)H-quinone oxidoreductase subunit H, chloroplastic (393 aa).

It belongs to the complex I 49 kDa subunit family. NDH is composed of at least 16 different subunits, 5 of which are encoded in the nucleus.

The protein resides in the plastid. Its subcellular location is the chloroplast thylakoid membrane. It carries out the reaction a plastoquinone + NADH + (n+1) H(+)(in) = a plastoquinol + NAD(+) + n H(+)(out). The enzyme catalyses a plastoquinone + NADPH + (n+1) H(+)(in) = a plastoquinol + NADP(+) + n H(+)(out). NDH shuttles electrons from NAD(P)H:plastoquinone, via FMN and iron-sulfur (Fe-S) centers, to quinones in the photosynthetic chain and possibly in a chloroplast respiratory chain. The immediate electron acceptor for the enzyme in this species is believed to be plastoquinone. Couples the redox reaction to proton translocation, and thus conserves the redox energy in a proton gradient. This chain is NAD(P)H-quinone oxidoreductase subunit H, chloroplastic, found in Brachypodium distachyon (Purple false brome).